A 394-amino-acid polypeptide reads, in one-letter code: Flap endonuclease 1-A (394 aa).

The interval 1–105 (MGIKGLTKLI…RELAKRFARR (105 aa)) is N-domain. Mg(2+) is bound at residue D34. R71 lines the DNA pocket. Mg(2+)-binding residues include D87, E159, E161, D180, and D182. Positions 123–254 (DVEKYSKKTV…QTALKMIRQH (132 aa)) are I-domain. E159 contacts DNA. DNA-binding residues include G232 and D234. Mg(2+) is bound at residue D234. The tract at residues 338–346 (SQGRLESFF) is interaction with PCNA. The tract at residues 343-394 (ESFFGVSSSSSNKRKEAPDSEASAGKQVKTAAAVKPAKAASKKGPAKGGKKK) is disordered. Residues 368–381 (KQVKTAAAVKPAKA) show a composition bias toward low complexity. Basic residues predominate over residues 382–394 (ASKKGPAKGGKKK).

The protein belongs to the XPG/RAD2 endonuclease family. FEN1 subfamily. Interacts with PCNA. Three molecules of FEN1 bind to one PCNA trimer with each molecule binding to one PCNA monomer. PCNA stimulates the nuclease activity without altering cleavage specificity. Mg(2+) serves as cofactor. Phosphorylated. Phosphorylation upon DNA damage induces relocalization to the nuclear plasma.

The protein resides in the nucleus. It is found in the nucleolus. It localises to the nucleoplasm. The protein localises to the mitochondrion. Structure-specific nuclease with 5'-flap endonuclease and 5'-3' exonuclease activities involved in DNA replication and repair. During DNA replication, cleaves the 5'-overhanging flap structure that is generated by displacement synthesis when DNA polymerase encounters the 5'-end of a downstream Okazaki fragment. It enters the flap from the 5'-end and then tracks to cleave the flap base, leaving a nick for ligation. Also involved in the long patch base excision repair (LP-BER) pathway, by cleaving within the apurinic/apyrimidinic (AP) site-terminated flap. Acts as a genome stabilization factor that prevents flaps from equilibrating into structures that lead to duplications and deletions. Also possesses 5'-3' exonuclease activity on nicked or gapped double-stranded DNA, and exhibits RNase H activity. Also involved in replication and repair of rDNA and in repairing mitochondrial DNA. The polypeptide is Flap endonuclease 1-A (Physcomitrium patens (Spreading-leaved earth moss)).